The primary structure comprises 757 residues: Endonuclease MutS2 (757 aa).

321-328 (GPNMGGKT) contacts ATP. Residues 681–756 (IDIRGMTVEE…GTGVTVVEVK (76 aa)) form the Smr domain.

The protein belongs to the DNA mismatch repair MutS family. MutS2 subfamily. Homodimer. Binds to stalled ribosomes, contacting rRNA. Interacts with MutL.

Nuclease activity is stimulated by interaction with MutL and inhibited in the presence of non-hydrolytic ATP (ADPnP). ATPase activity is stimulated by DNA. Endonuclease that is involved in the suppression of homologous recombination and thus may have a key role in the control of bacterial genetic diversity. Has ATPase activity. Binds to DNA. In terms of biological role, acts as a ribosome collision sensor, splitting the ribosome into its 2 subunits. Detects stalled/collided 70S ribosomes which it binds and splits by an ATP-hydrolysis driven conformational change. Acts upstream of the ribosome quality control system (RQC), a ribosome-associated complex that mediates the extraction of incompletely synthesized nascent chains from stalled ribosomes and their subsequent degradation. Probably generates substrates for RQC. This Thermotoga maritima (strain ATCC 43589 / DSM 3109 / JCM 10099 / NBRC 100826 / MSB8) protein is Endonuclease MutS2.